The primary structure comprises 339 residues: DNA-directed RNA polymerase subunit alpha (339 aa).

Residues 1 to 233 (MVREEVAGST…DLFLPFLHAE (233 aa)) form an alpha N-terminal domain (alpha-NTD) region. The segment at 264 to 339 (KKGIPLNCIF…IDLLKNKLSF (76 aa)) is alpha C-terminal domain (alpha-CTD).

It belongs to the RNA polymerase alpha chain family. As to quaternary structure, in plastids the minimal PEP RNA polymerase catalytic core is composed of four subunits: alpha, beta, beta', and beta''. When a (nuclear-encoded) sigma factor is associated with the core the holoenzyme is formed, which can initiate transcription.

Its subcellular location is the plastid. The protein resides in the chloroplast. It catalyses the reaction RNA(n) + a ribonucleoside 5'-triphosphate = RNA(n+1) + diphosphate. Functionally, DNA-dependent RNA polymerase catalyzes the transcription of DNA into RNA using the four ribonucleoside triphosphates as substrates. The sequence is that of DNA-directed RNA polymerase subunit alpha from Australopyrum velutinum (Mountain wheat-grass).